An 852-amino-acid chain; its full sequence is MVNFTVDEIRALMDRKRNIRNMSVIAHVDHGKSTLTDSLVSKAGIIAGSKAGETRFTDTRKDEQERCITIKSTAISLFFELEKKDLEFVKGENQFETVEVDGKKEKYNGFLINLIDSPGHVDFSSEVTAALRVTDGALVVVDCVSGVCVQTETVLRQAIAERIKPVLFMNKMDRALLELQLGAEELFQTFQRIVENINVIIATYGDDDGPMGPIMVDPSIGNVGFGSGLHGWAFTLKQFAEMYAGKFGVQVDKLMKNLWGDRFFDLKTKKWSSTQTDESKRGFCQFVLDPIFMVFDAVMNIKKDKTAALVEKLGIKLANDEKDLEGKPLMKVFMRKWLPAGDTMLQMIAFHLPSPVTAQKYRMEMLYEGPHDDEAAVAIKTCDPNGPLMMYISKMVPTSDKGRFYAFGRVFSGKVATGMKARIQGPNYVPGKKEDLYEKTIQRTILMMGRFIEPIEDIPSGNIAGLVGVDQYLVKGGTITTYKDAHNMRVMKFSVSPVVRVAVEAKNPADLPKLVEGLKRLAKSDPMVQCIFEESGEHIIAGAGELHLEICLKDLEEDHACIPLKKSDPVVSYRETVQSESNQICLSKSPNKHNRLHCTAQPMPDGLADDIEGGTVNARDEFKARAKILAEKYEYDVTEARKIWCFGPDGTGPNLLMDVTKGVQYLNEIKDSVVAGFQWATREGVLSDENMRGVRFNVHDVTLHADAIHRGGGQIIPTARRVFYASVLTAEPRLLEPVYLVEIQCPEAAVGGIYGVLNRRRGHVFEESQVTGTPMFVVKAYLPVNESFGFTADLRSNTGGQAFPQCVFDHWQVLPGDPLEAGTKPNQIVLDTRKRKGLKEGVPALDNYLDKM.

Positions 17-356 (RNIRNMSVIA…MIAFHLPSPV (340 aa)) constitute a tr-type G domain. Residue 26 to 33 (AHVDHGKS) participates in GTP binding. T57 and T59 each carry phosphothreonine. GTP contacts are provided by residues 170–173 (NKMD) and 227–229 (SGL). H709 carries the diphthamide modification.

This sequence belongs to the TRAFAC class translation factor GTPase superfamily. Classic translation factor GTPase family. EF-G/EF-2 subfamily. In terms of processing, phosphorylation by EF-2 kinase completely inactivates EF-2. Post-translationally, AMPylated by fic-1.

The protein resides in the cytoplasm. The enzyme catalyses GTP + H2O = GDP + phosphate + H(+). Catalyzes the GTP-dependent ribosomal translocation step during translation elongation. During this step, the ribosome changes from the pre-translocational (PRE) to the post-translocational (POST) state as the newly formed A-site-bound peptidyl-tRNA and P-site-bound deacylated tRNA move to the P and E sites, respectively. Catalyzes the coordinated movement of the two tRNA molecules, the mRNA and conformational changes in the ribosome. Involved in the morphogenesis of epidermal tissues. This chain is Elongation factor 2 (eef-2), found in Caenorhabditis elegans.